A 323-amino-acid polypeptide reads, in one-letter code: Methionyl-tRNA formyltransferase (323 aa).

117–120 (SLLP) is a binding site for (6S)-5,6,7,8-tetrahydrofolate.

Belongs to the Fmt family.

It carries out the reaction L-methionyl-tRNA(fMet) + (6R)-10-formyltetrahydrofolate = N-formyl-L-methionyl-tRNA(fMet) + (6S)-5,6,7,8-tetrahydrofolate + H(+). In terms of biological role, attaches a formyl group to the free amino group of methionyl-tRNA(fMet). The formyl group appears to play a dual role in the initiator identity of N-formylmethionyl-tRNA by promoting its recognition by IF2 and preventing the misappropriation of this tRNA by the elongation apparatus. The protein is Methionyl-tRNA formyltransferase of Albidiferax ferrireducens (strain ATCC BAA-621 / DSM 15236 / T118) (Rhodoferax ferrireducens).